We begin with the raw amino-acid sequence, 567 residues long: Urease subunit alpha (567 aa).

The region spanning 129-567 (GGIDSHIHFI…LPLAQRYFLF (439 aa)) is the Urease domain. The Ni(2+) site is built by His134, His136, and Lys217. An N6-carboxylysine modification is found at Lys217. Position 219 (His219) interacts with substrate. Residues His246 and His272 each coordinate Ni(2+). His320 serves as the catalytic Proton donor. Asp360 is a Ni(2+) binding site.

It belongs to the metallo-dependent hydrolases superfamily. Urease alpha subunit family. Heterotrimer of UreA (gamma), UreB (beta) and UreC (alpha) subunits. Three heterotrimers associate to form the active enzyme. It depends on Ni cation as a cofactor. Carboxylation allows a single lysine to coordinate two nickel ions.

The protein localises to the cytoplasm. It carries out the reaction urea + 2 H2O + H(+) = hydrogencarbonate + 2 NH4(+). The protein operates within nitrogen metabolism; urea degradation; CO(2) and NH(3) from urea (urease route): step 1/1. The sequence is that of Urease subunit alpha from Pseudomonas entomophila (strain L48).